Reading from the N-terminus, the 151-residue chain is UPAR/Ly6 domain-containing protein rtv (151 aa).

The first 19 residues, 1 to 19 (MQFTSLLLAVIFLISLVSI), serve as a signal peptide directing secretion. Residues 20–125 (DGLLRRCYQC…QGDLCNGARS (106 aa)) are Extracellular-facing. Cystine bridges form between cysteine 26/cysteine 65, cysteine 29/cysteine 38, cysteine 60/cysteine 88, cysteine 100/cysteine 113, and cysteine 115/cysteine 120. An N-linked (GlcNAc...) asparagine glycan is attached at asparagine 45. Asparagine 121 is lipidated: GPI-anchor amidated asparagine. A propeptide spans 122-151 (GARSWSSAPQMILITMLPLLGSWLLQRMRN) (removed in mature form). Residues 126–146 (WSSAPQMILITMLPLLGSWLL) form a helical membrane-spanning segment. Over 147–151 (QRMRN) the chain is Cytoplasmic.

It belongs to the quiver family.

It is found in the cell membrane. Required for chitin fiber assembly and organization involved in cuticle formation and tracheal development. The polypeptide is UPAR/Ly6 domain-containing protein rtv (Drosophila melanogaster (Fruit fly)).